The chain runs to 345 residues: Probable aldo-keto reductase 3 (345 aa).

Tyr-63 functions as the Proton donor in the catalytic mechanism. His-130 is a binding site for substrate. Residue 209–219 (SPLGRGFFASG) participates in NADP(+) binding.

It belongs to the aldo/keto reductase family.

This chain is Probable aldo-keto reductase 3, found in Arabidopsis thaliana (Mouse-ear cress).